The primary structure comprises 530 residues: Neutral amino acid transporter A (530 aa).

Met-1 carries the N-acetylmethionine modification. A compositionally biased stretch (polar residues) spans 1–10 (MEKSSETNGY). The interval 1 to 28 (MEKSSETNGYLDSAQEGPAAGPGEPGTT) is disordered. Residues 1 to 41 (MEKSSETNGYLDSAQEGPAAGPGEPGTTARRAGRCAGFLRR) lie on the Cytoplasmic side of the membrane. The segment covering 16–28 (EGPAAGPGEPGTT) has biased composition (low complexity). The next 3 membrane-spanning stretches (helical) occupy residues 42–62 (HGLV…GAAL), 88–108 (MIIL…LDAS), and 119–139 (AYFG…AFII). At 140 to 216 (KPGSGSQTLQ…VTIEKIPIGT (77 aa)) the chain is on the extracellular side. Residue Asn-201 is glycosylated (N-linked (GlcNAc...) asparagine). The next 6 helical transmembrane spans lie at 217–237 (EIEG…GVAL), 257–277 (ATMV…MFLV), 298–318 (IFTS…LIYF), 328–348 (FLLG…SSAT), 373–393 (IGAT…AVFI), and 418–438 (VGAA…LEAI). The segment at 488–530 (ELSEVKVEAIPNSKSEEETSPLVTHPNPTGPAASTPESKESVL) is disordered. 3 positions are modified to phosphoserine: Ser-507, Ser-525, and Ser-528.

This sequence belongs to the dicarboxylate/amino acid:cation symporter (DAACS) (TC 2.A.23) family. SLC1A4 subfamily.

The protein localises to the membrane. The protein resides in the melanosome. It carries out the reaction L-threonine(in) + Na(+)(in) = L-threonine(out) + Na(+)(out). The catalysed reaction is L-serine(in) + Na(+)(in) = L-serine(out) + Na(+)(out). The enzyme catalyses L-cysteine(in) + Na(+)(in) = L-cysteine(out) + Na(+)(out). It catalyses the reaction L-alanine(in) + Na(+)(in) = L-alanine(out) + Na(+)(out). It carries out the reaction L-proline(in) + Na(+)(in) = L-proline(out) + Na(+)(out). The catalysed reaction is 4-hydroxy-L-proline(in) + Na(+)(in) = 4-hydroxy-L-proline(out) + Na(+)(out). In terms of biological role, sodium-dependent neutral amino-acid transporter that mediates transport of alanine, serine, cysteine, proline, hydroxyproline and threonine. This chain is Neutral amino acid transporter A (SLC1A4), found in Bos taurus (Bovine).